A 461-amino-acid chain; its full sequence is Tubulin gamma-2 chain (461 aa).

142-148 contacts GTP; sequence AGGTGSG.

This sequence belongs to the tubulin family.

It localises to the cytoplasm. Its subcellular location is the cytoskeleton. It is found in the microtubule organizing center. The protein resides in the centrosome. Functionally, tubulin is the major constituent of microtubules. The gamma chain is found at microtubule organizing centers (MTOC) such as the spindle poles or the centrosome, suggesting that it is involved in the minus-end nucleation of microtubule assembly. The sequence is that of Tubulin gamma-2 chain from Euplotoides octocarinatus (Freshwater ciliate).